The sequence spans 486 residues: N-succinylglutamate 5-semialdehyde dehydrogenase (486 aa).

220–225 (GSSRTG) contributes to the NAD(+) binding site. Residues Glu243 and Cys277 contribute to the active site.

It belongs to the aldehyde dehydrogenase family. AstD subfamily.

The enzyme catalyses N-succinyl-L-glutamate 5-semialdehyde + NAD(+) + H2O = N-succinyl-L-glutamate + NADH + 2 H(+). It functions in the pathway amino-acid degradation; L-arginine degradation via AST pathway; L-glutamate and succinate from L-arginine: step 4/5. Catalyzes the NAD-dependent reduction of succinylglutamate semialdehyde into succinylglutamate. The polypeptide is N-succinylglutamate 5-semialdehyde dehydrogenase (Shewanella woodyi (strain ATCC 51908 / MS32)).